Here is a 336-residue protein sequence, read N- to C-terminus: Fructose-1,6-bisphosphatase class 1 (336 aa).

The Mg(2+) site is built by Glu-92, Asp-115, Leu-117, and Asp-118. Substrate-binding positions include 118–121 (DGSS), Asn-211, Tyr-244, 262–264 (YLY), and Lys-274. Glu-280 contributes to the Mg(2+) binding site.

Belongs to the FBPase class 1 family. Homotetramer. It depends on Mg(2+) as a cofactor.

Its subcellular location is the cytoplasm. It carries out the reaction beta-D-fructose 1,6-bisphosphate + H2O = beta-D-fructose 6-phosphate + phosphate. It participates in carbohydrate biosynthesis; gluconeogenesis. The protein is Fructose-1,6-bisphosphatase class 1 of Vibrio atlanticus (strain LGP32) (Vibrio splendidus (strain Mel32)).